The sequence spans 216 residues: Uracil phosphoribosyltransferase (216 aa).

5-phospho-alpha-D-ribose 1-diphosphate is bound by residues Arg85, Arg110, and 135–143 (DPMVATGYS). Uracil is bound by residues Ile200 and 205 to 207 (GDA). Asp206 provides a ligand contact to 5-phospho-alpha-D-ribose 1-diphosphate.

It belongs to the UPRTase family. The cofactor is Mg(2+).

The catalysed reaction is UMP + diphosphate = 5-phospho-alpha-D-ribose 1-diphosphate + uracil. It participates in pyrimidine metabolism; UMP biosynthesis via salvage pathway; UMP from uracil: step 1/1. With respect to regulation, allosterically activated by GTP. Its function is as follows. Catalyzes the conversion of uracil and 5-phospho-alpha-D-ribose 1-diphosphate (PRPP) to UMP and diphosphate. The sequence is that of Uracil phosphoribosyltransferase from Burkholderia ambifaria (strain ATCC BAA-244 / DSM 16087 / CCUG 44356 / LMG 19182 / AMMD) (Burkholderia cepacia (strain AMMD)).